Here is a 132-residue protein sequence, read N- to C-terminus: uncharacterized protein (132 aa).

This is an uncharacterized protein from Saccharomyces cerevisiae (strain ATCC 204508 / S288c) (Baker's yeast).